The following is a 224-amino-acid chain: LexA repressor (224 aa).

Positions Arg31–Gln51 form a DNA-binding region, H-T-H motif. Residues Ser142 and Lys179 each act as for autocatalytic cleavage activity in the active site.

This sequence belongs to the peptidase S24 family. In terms of assembly, homodimer.

The catalysed reaction is Hydrolysis of Ala-|-Gly bond in repressor LexA.. Represses a number of genes involved in the response to DNA damage (SOS response), including recA and lexA. In the presence of single-stranded DNA, RecA interacts with LexA causing an autocatalytic cleavage which disrupts the DNA-binding part of LexA, leading to derepression of the SOS regulon and eventually DNA repair. The sequence is that of LexA repressor from Verminephrobacter eiseniae (strain EF01-2).